Here is a 351-residue protein sequence, read N- to C-terminus: Transmembrane protein 184 homolog DDB_G0279555 (351 aa).

A helical transmembrane segment spans residues 1 to 21 (MWIVAGVCSGVAILLSFYLIY). Residue asparagine 26 is glycosylated (N-linked (GlcNAc...) asparagine). 5 helical membrane-spanning segments follow: residues 39-59 (ILIM…FVEL), 73-93 (YVLY…FDLV), 127-147 (FVLQ…VLET), 162-182 (YVWL…FLVL), and 206-226 (ILFF…FGVI). Asparagine 236 carries N-linked (GlcNAc...) asparagine glycosylation. Residues 241–261 (LQDFITCVEMVILAICHHFFF) traverse the membrane as a helical segment. N-linked (GlcNAc...) asparagine glycosylation is found at asparagine 301 and asparagine 304. A disordered region spans residues 327–351 (HNHPTTKKKDEESNLLEPEDKDIII). Acidic residues predominate over residues 339 to 351 (SNLLEPEDKDIII).

The protein belongs to the TMEM184 family.

The protein resides in the cell membrane. Probable transporter. In Dictyostelium discoideum (Social amoeba), this protein is Transmembrane protein 184 homolog DDB_G0279555 (tmem184C).